An 842-amino-acid chain; its full sequence is Protein translocase subunit SecA (842 aa).

ATP is bound by residues Gln-85, 103–107 (GEGKT), and Asp-493. The Zn(2+) site is built by Cys-825, Cys-827, Cys-836, and His-837.

This sequence belongs to the SecA family. Monomer and homodimer. Part of the essential Sec protein translocation apparatus which comprises SecA, SecYEG and auxiliary proteins SecDF. Other proteins may also be involved. Requires Zn(2+) as cofactor.

The protein localises to the cell membrane. It is found in the cytoplasm. It carries out the reaction ATP + H2O + cellular proteinSide 1 = ADP + phosphate + cellular proteinSide 2.. Part of the Sec protein translocase complex. Interacts with the SecYEG preprotein conducting channel. Has a central role in coupling the hydrolysis of ATP to the transfer of proteins into and across the cell membrane, serving as an ATP-driven molecular motor driving the stepwise translocation of polypeptide chains across the membrane. This Streptococcus equi subsp. equi (strain 4047) protein is Protein translocase subunit SecA.